Consider the following 192-residue polypeptide: Orotate phosphoribosyltransferase (192 aa).

5-phospho-alpha-D-ribose 1-diphosphate-binding positions include Arg84, Lys88, and 110-118 (DDVLTTGNS). Orotate-binding residues include Thr114 and Arg142.

The protein belongs to the purine/pyrimidine phosphoribosyltransferase family. PyrE subfamily. As to quaternary structure, homodimer. Mg(2+) is required as a cofactor.

It carries out the reaction orotidine 5'-phosphate + diphosphate = orotate + 5-phospho-alpha-D-ribose 1-diphosphate. Its pathway is pyrimidine metabolism; UMP biosynthesis via de novo pathway; UMP from orotate: step 1/2. Catalyzes the transfer of a ribosyl phosphate group from 5-phosphoribose 1-diphosphate to orotate, leading to the formation of orotidine monophosphate (OMP). In Pyrobaculum calidifontis (strain DSM 21063 / JCM 11548 / VA1), this protein is Orotate phosphoribosyltransferase.